The chain runs to 1604 residues: Putative surface cell antigen sca2 (1604 aa).

The signal sequence occupies residues 1–33; it reads MSLQNSHSKKYVLTFFMSTCLLTSSFLSTSARA. 3 disordered regions span residues 324–354, 554–603, and 1183–1240; these read TTKP…RTKP, NVNN…SNPN, and QQEN…KSLL. Over residues 554–564 the composition is skewed to low complexity; it reads NVNNNSNKGQN. A compositionally biased stretch (pro residues) spans 568–587; that stretch reads ILPPTPPLNGSMPPSPPPPL. Basic and acidic residues-rich tracts occupy residues 1193–1213 and 1227–1240; these read SSTK…KSDS and SKND…KSLL. Positions 1325 to 1604 constitute an Autotransporter domain; sequence EASINRGVWI…QGLIKLKVNL (280 aa).

The protein localises to the cell outer membrane. The protein is Putative surface cell antigen sca2 (sca2) of Rickettsia felis (strain ATCC VR-1525 / URRWXCal2) (Rickettsia azadi).